The chain runs to 501 residues: Aspartyl/glutamyl-tRNA(Asn/Gln) amidotransferase subunit B (501 aa).

A disordered region spans residues 272–291; the sequence is QETRHYQETDGTTSKGRPKE.

This sequence belongs to the GatB/GatE family. GatB subfamily. As to quaternary structure, heterotrimer of A, B and C subunits.

It carries out the reaction L-glutamyl-tRNA(Gln) + L-glutamine + ATP + H2O = L-glutaminyl-tRNA(Gln) + L-glutamate + ADP + phosphate + H(+). It catalyses the reaction L-aspartyl-tRNA(Asn) + L-glutamine + ATP + H2O = L-asparaginyl-tRNA(Asn) + L-glutamate + ADP + phosphate + 2 H(+). Allows the formation of correctly charged Asn-tRNA(Asn) or Gln-tRNA(Gln) through the transamidation of misacylated Asp-tRNA(Asn) or Glu-tRNA(Gln) in organisms which lack either or both of asparaginyl-tRNA or glutaminyl-tRNA synthetases. The reaction takes place in the presence of glutamine and ATP through an activated phospho-Asp-tRNA(Asn) or phospho-Glu-tRNA(Gln). The protein is Aspartyl/glutamyl-tRNA(Asn/Gln) amidotransferase subunit B of Corynebacterium efficiens (strain DSM 44549 / YS-314 / AJ 12310 / JCM 11189 / NBRC 100395).